The chain runs to 272 residues: 2-succinyl-6-hydroxy-2,4-cyclohexadiene-1-carboxylate synthase (272 aa).

The protein belongs to the AB hydrolase superfamily. MenH family. In terms of assembly, monomer.

The enzyme catalyses 5-enolpyruvoyl-6-hydroxy-2-succinyl-cyclohex-3-ene-1-carboxylate = (1R,6R)-6-hydroxy-2-succinyl-cyclohexa-2,4-diene-1-carboxylate + pyruvate. It participates in quinol/quinone metabolism; 1,4-dihydroxy-2-naphthoate biosynthesis; 1,4-dihydroxy-2-naphthoate from chorismate: step 3/7. The protein operates within quinol/quinone metabolism; menaquinone biosynthesis. Catalyzes a proton abstraction reaction that results in 2,5-elimination of pyruvate from 2-succinyl-5-enolpyruvyl-6-hydroxy-3-cyclohexene-1-carboxylate (SEPHCHC) and the formation of 2-succinyl-6-hydroxy-2,4-cyclohexadiene-1-carboxylate (SHCHC). This Yersinia pestis (strain Pestoides F) protein is 2-succinyl-6-hydroxy-2,4-cyclohexadiene-1-carboxylate synthase.